The primary structure comprises 559 residues: Mercuric reductase (559 aa).

One can recognise an HMA domain in the interval 1–64 (MYLNITGMTC…AVAGLGYKAT (64 aa)). 2 residues coordinate a metal cation: cysteine 10 and cysteine 13. Residues alanine 108, glycine 128, and threonine 133 each contribute to the FAD site. A disulfide bond links cysteine 134 and cysteine 139. The FAD site is built by lysine 143, alanine 209, aspartate 401, and valine 409. 2 residues coordinate Hg(2+): cysteine 556 and cysteine 557.

It belongs to the class-I pyridine nucleotide-disulfide oxidoreductase family. In terms of assembly, homodimer. Requires FAD as cofactor.

The enzyme catalyses Hg + NADP(+) + H(+) = Hg(2+) + NADPH. Resistance to Hg(2+) in bacteria appears to be governed by a specialized system which includes mercuric reductase. MerA protein is responsible for volatilizing mercury as Hg(0). This is Mercuric reductase (merA) from Alcaligenes sp.